Reading from the N-terminus, the 386-residue chain is CRISPR system endoribonuclease Csm6' (386 aa).

Residues 1–146 (MRVLISAVGD…ASNENIGHDN (146 aa)) form a CARF domain region. Residues 147-386 (DENIDELIEV…LNKILLTKLN (240 aa)) are HEPN domain.

The protein belongs to the CRISPR-associated Csm6 family. As to quaternary structure, homodimer. The composite ssRNase active site is formed at the dimer interface.

Its activity is regulated as follows. Non-specific ssRNase activity is stimulated about 1000-fold by cyclic oligoadenylate (cOA), a second messenger produced by Cas10 of the ternary Csm effector complex in the presence of a cognate target RNA. Its function is as follows. CRISPR (clustered regularly interspaced short palindromic repeat) is an adaptive immune system that provides protection against mobile genetic elements (viruses, transposable elements and conjugative plasmids). CRISPR clusters contain spacers, sequences complementary to antecedent mobile elements, and target invading nucleic acids. CRISPR clusters are transcribed and processed into CRISPR RNA (crRNA). The type III-A Csm complex binds crRNA and acts as a crRNA-guided RNase, DNase and cyclic oligoadenylate synthase; binding of target RNA cognate to the crRNA is required for all activities. In a heterologous host this Csm effector complex restricts ssRNA phage MS2, suggesting it may target RNA viruses in vivo. This protein is not part of the Csm complex. Csm functions as a non-specific ssDNase. Base-pairing between crRNA and target RNA to form a ternary Csm complex activates a ssDNase activity; target RNA cleavage suppresses the ssDNase, a temporal control that prevents uncontrolled DNA degradation. Viral RNA transcripts probably tether the Csm complex to the viral genome, recruiting Cas10 ssDNA activity which is able to degrade DNA in the transcription bubble, spatially controlling the DNase activity. Functionally, a single-strand-specific endoribonuclease (ssRNase) that is approximately 1000-fold stimulated by cyclic oligoadenylate (cOA); although several species of cOA are synthesized by this organism only cyclic hexaadenylate (cA6) stimulates the ssRNase activity. Cleaves preferentially within GA or AA dinucleotides, although the presence of cA6 broadens the preference. This chain is CRISPR system endoribonuclease Csm6', found in Streptococcus thermophilus.